Here is a 532-residue protein sequence, read N- to C-terminus: Eukaryotic translation initiation factor 3 subunit D (532 aa).

The interval 108 to 161 (ATVLKTRGGAPRGGSFAGRGGSQRGGRFQNQPGRGPVGGQRGPNPRFGKSKFGW) is disordered. The segment covering 117-131 (APRGGSFAGRGGSQR) has biased composition (gly residues). Over residues 132-141 (GGRFQNQPGR) the composition is skewed to low complexity. An RNA gate region spans residues 296 to 310 (PLDFITVDENAADPP).

This sequence belongs to the eIF-3 subunit D family. Component of the eukaryotic translation initiation factor 3 (eIF-3) complex.

The protein localises to the cytoplasm. MRNA cap-binding component of the eukaryotic translation initiation factor 3 (eIF-3) complex, which is involved in protein synthesis of a specialized repertoire of mRNAs and, together with other initiation factors, stimulates binding of mRNA and methionyl-tRNAi to the 40S ribosome. The eIF-3 complex specifically targets and initiates translation of a subset of mRNAs involved in cell proliferation. In the eIF-3 complex, eif3d specifically recognizes and binds the 7-methylguanosine cap of a subset of mRNAs. The polypeptide is Eukaryotic translation initiation factor 3 subunit D (Yarrowia lipolytica (strain CLIB 122 / E 150) (Yeast)).